A 204-amino-acid polypeptide reads, in one-letter code: MDLTIVGSDNTLPVSDVVFGREFSEALVHQVVVAYRNTARSGTKAQKSRSQVSGTTKKSKKQKGGGARHGALTAPIFVGGGVAFAAKPRSFSQKVNRKQYRSAICSIFSELNRQGRLKVVDAFDVEVSKTKVFAEKIKSLEVVGVGSSLLIVSDEISECLSLSSRNLPCVDVRSVQALDPVALVGSDVVVLTVGAVKKIEEWLV.

The segment covering 42 to 52 (GTKAQKSRSQV) has biased composition (polar residues). Residues 42–70 (GTKAQKSRSQVSGTTKKSKKQKGGGARHG) form a disordered region.

Belongs to the universal ribosomal protein uL4 family. Part of the 50S ribosomal subunit.

Functionally, one of the primary rRNA binding proteins, this protein initially binds near the 5'-end of the 23S rRNA. It is important during the early stages of 50S assembly. It makes multiple contacts with different domains of the 23S rRNA in the assembled 50S subunit and ribosome. Its function is as follows. Forms part of the polypeptide exit tunnel. This is Large ribosomal subunit protein uL4 from Xylella fastidiosa (strain M12).